A 377-amino-acid polypeptide reads, in one-letter code: MSSISTGRTALRSARRVVVKIGTNALTNATGRFNRQHFDALGQDLLWAAQGRELVVVSSGAIALGVERLGLPSRPRDIPGKQACAAVGQSRLVQAYEEAFAAHGKAVAQVLLTHEDVQERRRYLNVKHTLERLLTAGVVPVINENDTVSVDELKFGDNDTLAGLVAGVVDADALVLLSDVEGLYTGDPRRDAGAELLATVMQVTPEVLALATGTSSGVGTGGMSTKVRAAARASDSGIHCVITSGAVPGRLRAVLEGADVGTHFEPTGSRRSARAAWIAHALRARGTLTVDAGAREAIVTGKRSLLPSGVRGVEGDFGRGDPVDLVDAEGAVFARGLAAYDANELRRIAGHRTADIEAVLGYRYLDEAVHRDDLAVL.

ATP is bound at residue Lys20. Substrate-binding residues include Ser59, Asp146, and Asn158. Residues 178–179 and 220–226 each bind ATP; these read SD and TGGMSTK. The 79-residue stretch at 285-363 folds into the PUA domain; sequence RGTLTVDAGA…ADIEAVLGYR (79 aa).

It belongs to the glutamate 5-kinase family.

The protein localises to the cytoplasm. The catalysed reaction is L-glutamate + ATP = L-glutamyl 5-phosphate + ADP. It participates in amino-acid biosynthesis; L-proline biosynthesis; L-glutamate 5-semialdehyde from L-glutamate: step 1/2. In terms of biological role, catalyzes the transfer of a phosphate group to glutamate to form L-glutamate 5-phosphate. The sequence is that of Glutamate 5-kinase from Myxococcus xanthus (strain DK1622).